Here is a 313-residue protein sequence, read N- to C-terminus: Formimidoylglutamase (313 aa).

Residues histidine 130, aspartate 155, histidine 157, aspartate 159, aspartate 241, and aspartate 243 each coordinate Mn(2+).

This sequence belongs to the arginase family. Mn(2+) serves as cofactor.

It carries out the reaction N-formimidoyl-L-glutamate + H2O = formamide + L-glutamate. Its pathway is amino-acid degradation; L-histidine degradation into L-glutamate; L-glutamate from N-formimidoyl-L-glutamate (hydrolase route): step 1/1. Functionally, catalyzes the conversion of N-formimidoyl-L-glutamate to L-glutamate and formamide. The chain is Formimidoylglutamase from Salmonella heidelberg (strain SL476).